The primary structure comprises 217 residues: Small ribosomal subunit protein uS3 (217 aa).

One can recognise a KH type-2 domain in the interval 38-106 (IRKFINKELA…QVHINIIEIK (69 aa)).

Belongs to the universal ribosomal protein uS3 family. As to quaternary structure, part of the 30S ribosomal subunit. Forms a tight complex with proteins S10 and S14.

In terms of biological role, binds the lower part of the 30S subunit head. Binds mRNA in the 70S ribosome, positioning it for translation. This Streptococcus pyogenes serotype M6 (strain ATCC BAA-946 / MGAS10394) protein is Small ribosomal subunit protein uS3.